We begin with the raw amino-acid sequence, 630 residues long: uncharacterized protein (630 aa).

Transmembrane regions (helical) follow at residues 8 to 28 (LFNM…ASAV) and 258 to 278 (VDNS…PLVI). A disordered region spans residues 399 to 426 (EETSKPTEQPSPADSTSTPAAPEKGAAS). Polar residues predominate over residues 404–417 (PTEQPSPADSTSTP).

Belongs to the peptidase S1C family.

Its subcellular location is the cell membrane. This is an uncharacterized protein from Sinorhizobium fredii (strain NBRC 101917 / NGR234).